The sequence spans 659 residues: Anoctamin-10 (659 aa).

The Cytoplasmic portion of the chain corresponds to 1-207 (MRVTLSTLDT…DSIRSYFGET (207 aa)). The helical transmembrane segment at 208-228 (IALYFGFLEYFTFALIPMAII) threads the bilayer. Over 229–240 (GLPYYLFVWEDY) the chain is Extracellular. A helical transmembrane segment spans residues 241–261 (DKYVIFASFNLIWSTVILEVW). Topologically, residues 262–316 (KRGCANMTYRWGTLVMKRQFEEPRPGFHGVLGINSVTGREEPLYSSYKRQLRIYL) are cytoplasmic. Residues 317–337 (VSLPFVCLCLYFSLYVMMIYF) traverse the membrane as a helical segment. At 338–352 (DMEDWALSLHEDSGS) the chain is on the extracellular side. A helical transmembrane segment spans residues 353-373 (EWTSLLLYVPSIVYAVVIEIM). At 374–400 (NRLYRYAAEFLTSWENHRLESAYQNHL) the chain is on the cytoplasmic side. Residues 401–421 (VLKVLVFNFLNCFASLFYIAF) form a helical membrane-spanning segment. Residues 422–500 (VLKDMKLLRQ…YLGTFDDYLE (79 aa)) lie on the Extracellular side of the membrane. Residues 501–521 (LFLQFGYVSLFSCVYPLAAAF) form a helical membrane-spanning segment. At 522-553 (AVLNNFTEVNSDALKMCRVFKRPFAEPSASIG) the chain is on the cytoplasmic side. A helical membrane pass occupies residues 554-574 (VWQLAFETMSVISVVTNCALI). The Extracellular segment spans residues 575 to 590 (GMSPQVNAVFPESKTD). The chain crosses the membrane as a helical span at residues 591–611 (LVLIVVAVEHALLALKFILAF). Residues 612-659 (AIPDKPRHIQQKLARLEFESLEALKQQQMKLVAENLKEEYQEDGKEAT) are Cytoplasmic-facing.

Belongs to the anoctamin family. Predominant expression seen in epithelial tissues.

It is found in the cell membrane. Does not exhibit calcium-activated chloride channel (CaCC) activity. Can inhibit the activity of ANO1. This chain is Anoctamin-10 (Ano10), found in Mus musculus (Mouse).